Reading from the N-terminus, the 113-residue chain is MNTLDFLDKKSLRDDIPEFRPGDTLNVNVKVIEGSKERVQVFKGVVIRRQGGGVRETFTVRKVSFGVGVERTFPVHSPTLASIEVLTRGDVRRAKLYYLRELRGKKAKIKEKR.

This sequence belongs to the bacterial ribosomal protein bL19 family.

Its function is as follows. This protein is located at the 30S-50S ribosomal subunit interface and may play a role in the structure and function of the aminoacyl-tRNA binding site. The chain is Large ribosomal subunit protein bL19 from Rhodococcus erythropolis (strain PR4 / NBRC 100887).